Consider the following 480-residue polypeptide: PTS system sucrose-specific EIIBC component (480 aa).

Residues 4 to 87 form the PTS EIIB type-1 domain; sequence KKSAENILQA…EKITGKEASS (84 aa). Residue Cys-26 is the Phosphocysteine intermediate; for EIIB activity of the active site. 8 helical membrane passes run 109-129, 158-178, 182-202, 264-284, 303-323, 349-369, 405-425, and 449-469; these read LSDIFVPIIPAIVAGGLLMGI, MINIFANAPFTLLPILIGFSA, FGGNAYLGAALGMILVHPELM, LLTPLLAILSTGFITFSFVGP, FGGAIGGLIFGLLYAPIVITG, PIATMSNIAQGAAALAAFFII, PFIGAIVGSGIGSAYIAFFKV, and LHYGIAMIIAFIVAFGVTYAL. Residues 120–480 form the PTS EIIC type-1 domain; the sequence is IVAGGLLMGI…YRKKYRNIEA (361 aa).

It localises to the cell membrane. It carries out the reaction N(pros)-phospho-L-histidyl-[protein](out) + sucrose = sucrose 6(G)-phosphate(in) + L-histidyl-[protein]. In terms of biological role, the phosphoenolpyruvate-dependent sugar phosphotransferase system (sugar PTS), a major carbohydrate active transport system, catalyzes the phosphorylation of incoming sugar substrates concomitantly with their translocation across the cell membrane. This system is involved in sucrose transport. This chain is PTS system sucrose-specific EIIBC component, found in Staphylococcus xylosus.